The primary structure comprises 317 residues: Serpentine receptor class delta-26 (317 aa).

7 consecutive transmembrane segments (helical) span residues 5 to 25 (LLHT…MYLA), 38 to 58 (AIIT…FFVM), 83 to 103 (ACYV…IWMI), 122 to 142 (SLVF…AAWI), 176 to 196 (ITLI…YAWI), 227 to 247 (FQVF…AMFG), and 258 to 278 (LVSI…ILFV).

It belongs to the nematode receptor-like protein srd family.

Its subcellular location is the membrane. The sequence is that of Serpentine receptor class delta-26 (srd-26) from Caenorhabditis elegans.